The following is a 194-amino-acid chain: PLASMODESMATA CALLOSE-BINDING PROTEIN 2 (194 aa).

An N-terminal signal peptide occupies residues 1–16 (MAPLVLYLLTLLMAGH). Residues C22 and C84 are joined by a disulfide bond. N85 carries an N-linked (GlcNAc...) asparagine glycan. A compositionally biased stretch (low complexity) spans 106 to 116 (SSASGSSGSGS). The disordered stretch occupies residues 106–140 (SSASGSSGSGSTTVTPGKNSPKGSNSITTFPGGNS). Over residues 117 to 140 (TTVTPGKNSPKGSNSITTFPGGNS) the composition is skewed to polar residues. N154 is a glycosylation site (N-linked (GlcNAc...) asparagine). S171 is lipidated: GPI-anchor amidated serine. Residues 172-194 (SGFALYYSNNLLLTGFCSLVMML) constitute a propeptide, removed in mature form.

In terms of processing, contains two additional disulfide bonds. As to expression, expressed in the shoot apical region and in young leaves but also detected in the laminar and vasculature of mature leaves.

It is found in the cell membrane. Its subcellular location is the cell junction. It localises to the plasmodesma. Able to bind (1-&gt;3)-beta-D-glucans (laminarin). The sequence is that of PLASMODESMATA CALLOSE-BINDING PROTEIN 2 (PDCB2) from Arabidopsis thaliana (Mouse-ear cress).